The primary structure comprises 512 residues: Phospho-2-dehydro-3-deoxyheptonate aldolase 2, chloroplastic (512 aa).

The N-terminal 57 residues, methionine 1–proline 57, are a transit peptide targeting the chloroplast. The tract at residues phenylalanine 37–proline 57 is disordered. Residue cysteine 126 participates in Mn(2+) binding. Substrate contacts are provided by residues arginine 165, glutamate 324–arginine 325, lysine 347, and arginine 378. Mn(2+)-binding residues include histidine 410, glutamate 452, and aspartate 482.

It belongs to the class-II DAHP synthase family. In terms of assembly, homodimer. It depends on Mn(2+) as a cofactor. Mostly expressed in leaves and stems, and, to a lower extent, in roots, stigmas, anthers, petal tubes, petal limbs and sepals.

Its subcellular location is the plastid. The protein localises to the chloroplast. The enzyme catalyses D-erythrose 4-phosphate + phosphoenolpyruvate + H2O = 7-phospho-2-dehydro-3-deoxy-D-arabino-heptonate + phosphate. The protein operates within metabolic intermediate biosynthesis; chorismate biosynthesis; chorismate from D-erythrose 4-phosphate and phosphoenolpyruvate: step 1/7. Its function is as follows. Involved in the production of volatile organic compounds (VOCs). Catalyzes an aldol-like condensation reaction between phosphoenolpyruvate (PEP) and D-erythrose 4-phosphate (E4P) to generate 3-deoxy-D-arabino-heptulosonate 7-phosphate (DAH7P) and inorganic phosphate. The sequence is that of Phospho-2-dehydro-3-deoxyheptonate aldolase 2, chloroplastic from Petunia hybrida (Petunia).